The following is a 1054-amino-acid chain: Proteoglycan 4 (1054 aa).

Residues 1-24 (MGWKILPVCLSLLLPVVLIQQVSS) form the signal peptide. SMB domains are found at residues 26–69 (DLSS…PELS) and 66–108 (PELS…EEVH). 14 disulfides stabilise this stretch: cysteine 30/cysteine 34, cysteine 30/cysteine 46, cysteine 34/cysteine 64, cysteine 44/cysteine 46, cysteine 44/cysteine 57, cysteine 50/cysteine 56, cysteine 57/cysteine 64, cysteine 70/cysteine 74, cysteine 70/cysteine 86, cysteine 74/cysteine 104, cysteine 84/cysteine 86, cysteine 84/cysteine 97, cysteine 90/cysteine 96, and cysteine 97/cysteine 104. N-linked (GlcNAc...) asparagine glycosylation occurs at asparagine 109. Positions 110 to 125 (STSPSSKTAPTPAGAS) are enriched in low complexity. The tract at residues 110 to 764 (STSPSSKTAP…PLIPGPPVLF (655 aa)) is disordered. Serine 135 is a glycosylation site (O-linked (GalNAc...) serine). Low complexity predominate over residues 162-175 (QESSSSSSSSSSTI). Over residues 188–200 (ELQKNPNVKDNKK) the composition is skewed to basic and acidic residues. A compositionally biased stretch (pro residues) spans 229–238 (TPPPPDPPTT). Threonine 237 and threonine 250 each carry an O-linked (GalNAc...) threonine glycan. Residues 286-295 (TTATNKQSSA) are compositionally biased toward low complexity. A glycan (O-linked (GalNAc...) threonine) is linked at threonine 301. O-linked (GalNAc...) serine glycosylation occurs at serine 302. The span at 302–318 (SVKETRSAEKTSDKDVE) shows a compositional bias: basic and acidic residues. A glycan (O-linked (GalNAc...) threonine) is linked at threonine 306. O-linked (GalNAc...) serine glycosylation is present at serine 313. One copy of the 1; approximate repeat lies at 317 to 324 (VEPTSTTP). A 37 X 8 AA repeats of K-X-P-X-P-T-T-X region spans residues 317–618 (VEPTSTTPKN…TPKKPEPTTT (302 aa)). The span at 319-328 (PTSTTPKNSA) shows a compositional bias: polar residues. Residues 325-332 (KNSAPTTT) form a 2; approximate repeat. O-linked (GalNAc...) serine glycosylation occurs at serine 327. The segment covering 329–339 (PTTTKKPVTTT) has biased composition (low complexity). 11 O-linked (GalNAc...) threonine glycosylation sites follow: threonine 330, threonine 338, threonine 354, threonine 362, threonine 369, threonine 377, threonine 378, threonine 385, threonine 386, threonine 393, and threonine 394. The 3; approximate repeat unit spans residues 333–340 (KKPVTTTK). A 4; approximate repeat occupies 349 to 356 (QEPEPTTA). Repeat 5 spans residues 357-364 (KEPPPTTK). The segment covering 364–399 (KKPEPTTRKEPEPTTPKEPEPTTPKEPEPTTPKEPE) has biased composition (basic and acidic residues). The 6; approximate repeat unit spans residues 365 to 371 (KPEPTTR). Repeat copies occupy residues 372 to 379 (KEPEPTTP), 380 to 387 (KEPEPTTP), 388 to 395 (KEPEPTTP), 396 to 403 (KEPEPTTP), and 404 to 411 (KEPPPTTK). The span at 400-426 (PTTPKEPPPTTKKPEPTTPKEPGPTTP) shows a compositional bias: pro residues. Residues 412-418 (KPEPTTP) form a 12; approximate repeat. 8 O-linked (GalNAc...) threonine glycosylation sites follow: threonine 416, threonine 417, threonine 424, threonine 432, threonine 433, threonine 440, threonine 441, and threonine 448. Tandem repeats lie at residues 419 to 426 (KEPGPTTP), 427 to 434 (KEPEPTTT), and 435 to 442 (KEPEPTTT). Positions 427–550 (KEPEPTTTKE…PEPTTPKKPE (124 aa)) are enriched in basic and acidic residues. The stretch at 443-450 (KEPESTTR) is one 16; approximate repeat. 21 consecutive repeat copies span residues 451-458 (KEPEPTTP), 459-466 (KEPEPTTP), 467-474 (KEPEPTTL), 475-482 (KEPEPTTP), 483-490 (KEPEPTTP), 491-498 (KEPEPTTP), 499-506 (KEPEPTTP), 507-514 (KEPEPTTP), 515-522 (KEPEPTTP), 523-530 (KEPEPTTP), 531-538 (KEPEPTTP), 539-546 (KEPEPTTP), 547-554 (KKPEPTTP), 555-562 (KEPVPTTP), 563-570 (KEPEPTTP), 571-578 (KEPEPTTP), 579-586 (KEPEPTTR), 587-594 (KEPEPTTP), 595-602 (KEPEPTTP), 603-610 (KEPEPTTP), and 611-618 (KKPEPTTT). O-linked (GalNAc...) threonine glycans are attached at residues threonine 472, threonine 480, threonine 481, threonine 488, threonine 489, threonine 496, threonine 497, threonine 504, threonine 505, threonine 512, threonine 520, threonine 521, threonine 528, and threonine 529. Over residues 551 to 562 (PTTPKEPVPTTP) the composition is skewed to pro residues. Threonine 553, threonine 560, threonine 561, threonine 568, threonine 569, threonine 576, and threonine 577 each carry an O-linked (GalNAc...) threonine glycan. Over residues 563-614 (KEPEPTTPKEPEPTTPKEPEPTTRKEPEPTTPKEPEPTTPKEPEPTTPKKPE) the composition is skewed to basic and acidic residues. 3 O-linked (GalNAc...) threonine glycosylation sites follow: threonine 592, threonine 600, and threonine 601. A compositionally biased stretch (low complexity) spans 615–624 (PTTTSPKTTT). O-linked (GalNAc...) threonine glycosylation is found at threonine 622, threonine 624, threonine 628, threonine 629, and threonine 692. Basic residues predominate over residues 672–699 (KPTKKPTKAPKKPTSTKKPKTPKTRKPK). Residues 700–712 (TTPSPLKTTSATP) are compositionally biased toward low complexity. Residues 713–735 (ELNTTPLEVMLPTTTIPKQTPNP) are compositionally biased toward polar residues. Cysteine 795 and cysteine 1053 are joined by a disulfide. Hemopexin repeat units follow at residues 797–840 (GKPV…VWGI) and 841–888 (PSPI…FGGL). Asparagine 808 carries N-linked (GlcNAc...) asparagine glycosylation. O-linked (GalNAc...) threonine glycosylation occurs at threonine 810. A glycan (N-linked (GlcNAc...) asparagine) is linked at asparagine 938.

Homodimer; disulfide-linked. N-glycosylated. Post-translationally, O-glycosylated; contains glycosaminoglycan chondroitin sulfate and keratan sulfate. O-glycosylated with sialylated oligosaccharides which are predominantly represented by the monosialylated core type I structure, NeuNAcalpha2-3Galbeta1-3GalNAc, with smaller amounts of disialylated O-glycans. In terms of processing, the disulfide bond between Cys-795 and Cys-1053 is essential for protein cleavage. Proteolytically cleaved by cathepsin CTSG. As to expression, highly expressed in cartilage, bone and liver and weakly expressed in heart, brain and muscle. Expressed in the surface chondrocytes and in synovial intimal cells. Isoform B is expressed in bone, small intestine, muscle, testis, heart, liver and lung. Isoform C and isoform D are widely expressed.

It localises to the secreted. Functionally, plays a role in boundary lubrication within articulating joints. Prevents protein deposition onto cartilage from synovial fluid by controlling adhesion-dependent synovial growth and inhibiting the adhesion of synovial cells to the cartilage surface. This Mus musculus (Mouse) protein is Proteoglycan 4 (Prg4).